Consider the following 330-residue polypeptide: Catharanthine synthase (330 aa).

Positions 81 to 83 match the Involved in the stabilization of the negatively charged intermediate by the formation of the oxyanion hole motif; the sequence is HGA. Catharanthine is bound at residue G84. S173 functions as the Proton acceptor in the catalytic mechanism. The active site involves D274. Y305 lines the catharanthine pocket. Catalysis depends on Y305, which acts as the Proton donor/acceptor.

Belongs to the 'GDXG' lipolytic enzyme family. In terms of assembly, interacts with dehydroprecondylocarpine acetate synthase (DPAS). Expressed in leaf epidermis.

Its subcellular location is the cytoplasm. It localises to the cytosol. The protein resides in the nucleus. The enzyme catalyses dehydrosecodine = catharanthine. It functions in the pathway alkaloid biosynthesis. Its function is as follows. Component of iboga and aspidosperma monoterpenoid indole alkaloids (MIAs, e.g. tabersonine and catharanthine) biosynthesis pathway from 19E-geissoschizine, psychoactive compounds likely to be used in the treatment of opioid dependence. Catalyzes the conversion of dehydrosecodine to catharanthine. The polypeptide is Catharanthine synthase (Catharanthus roseus (Madagascar periwinkle)).